We begin with the raw amino-acid sequence, 74 residues long: ATP synthase subunit c (74 aa).

2 helical membrane passes run 5-25 (LAHIGAGLAAIGSGAAAIGVG) and 49-69 (LFIGIAFAEALGIFAFLVALL).

It belongs to the ATPase C chain family. F-type ATPases have 2 components, F(1) - the catalytic core - and F(0) - the membrane proton channel. F(1) has five subunits: alpha(3), beta(3), gamma(1), delta(1), epsilon(1). F(0) has three main subunits: a(1), b(2) and c(10-14). The alpha and beta chains form an alternating ring which encloses part of the gamma chain. F(1) is attached to F(0) by a central stalk formed by the gamma and epsilon chains, while a peripheral stalk is formed by the delta and b chains.

The protein resides in the cell inner membrane. In terms of biological role, f(1)F(0) ATP synthase produces ATP from ADP in the presence of a proton or sodium gradient. F-type ATPases consist of two structural domains, F(1) containing the extramembraneous catalytic core and F(0) containing the membrane proton channel, linked together by a central stalk and a peripheral stalk. During catalysis, ATP synthesis in the catalytic domain of F(1) is coupled via a rotary mechanism of the central stalk subunits to proton translocation. Key component of the F(0) channel; it plays a direct role in translocation across the membrane. A homomeric c-ring of between 10-14 subunits forms the central stalk rotor element with the F(1) delta and epsilon subunits. This Ruegeria pomeroyi (strain ATCC 700808 / DSM 15171 / DSS-3) (Silicibacter pomeroyi) protein is ATP synthase subunit c.